We begin with the raw amino-acid sequence, 476 residues long: ATP synthase subunit beta (476 aa).

Residue 154–161 (GGAGVGKT) participates in ATP binding.

It belongs to the ATPase alpha/beta chains family. As to quaternary structure, F-type ATPases have 2 components, CF(1) - the catalytic core - and CF(0) - the membrane proton channel. CF(1) has five subunits: alpha(3), beta(3), gamma(1), delta(1), epsilon(1). CF(0) has four main subunits: a(1), b(1), b'(1) and c(9-12).

The protein resides in the cell inner membrane. The catalysed reaction is ATP + H2O + 4 H(+)(in) = ADP + phosphate + 5 H(+)(out). Functionally, produces ATP from ADP in the presence of a proton gradient across the membrane. The catalytic sites are hosted primarily by the beta subunits. The sequence is that of ATP synthase subunit beta from Rhodopseudomonas palustris (strain BisA53).